A 715-amino-acid polypeptide reads, in one-letter code: Polyribonucleotide nucleotidyltransferase (715 aa).

Residues Asp498 and Asp504 each contribute to the Mg(2+) site. The KH domain occupies 565–625 (PKVCMMQIKP…ETVKKTVAFI (61 aa)). The S1 motif domain occupies 635 to 709 (GTCYQASILR…RIDFLLLPKK (75 aa)).

It belongs to the polyribonucleotide nucleotidyltransferase family. Requires Mg(2+) as cofactor.

The protein localises to the cytoplasm. The catalysed reaction is RNA(n+1) + phosphate = RNA(n) + a ribonucleoside 5'-diphosphate. Its function is as follows. Involved in mRNA degradation. Catalyzes the phosphorolysis of single-stranded polyribonucleotides processively in the 3'- to 5'-direction. This chain is Polyribonucleotide nucleotidyltransferase, found in Aster yellows witches'-broom phytoplasma (strain AYWB).